Reading from the N-terminus, the 148-residue chain is Augurin (148 aa).

Positions 1–31 are cleaved as a signal peptide; that stretch reads MSTSSARPAVLALAGLALLLLLCLGPDGISG. 2 propeptides span residues 32 to 70 and 133 to 148; these read NKLKKMLQKREGPVPSKTNVAVAENTAKEFLGGLKRAKR and SRESFRHGASVNYNDY.

The protein belongs to the augurin family. Expressed in the intermediate lobe of pituitary, glomerular layer of adrenal cortex, choroid plexus and atrioventricular node of the heart. Expressed in the brain with high expression in the choroid plexus and the epithelial lining of the central canal and expression in the gray matter of the spinal cord (at protein level).

The protein localises to the secreted. Its subcellular location is the cytoplasm. It localises to the apical cell membrane. Functionally, probable hormone that may attenuate cell proliferation and induce senescence of oligodendrocyte and neural precursor cells in the central nervous system. ECRG4-induced senescence is characterized by G1 arrest, RB1 dephosphorylation and accelerated CCND1 and CCND3 proteasomal degradation. The chain is Augurin from Mus musculus (Mouse).